We begin with the raw amino-acid sequence, 835 residues long: Replication origin-binding protein (835 aa).

In terms of domain architecture, Helicase ATP-binding spans 54 to 215; the sequence is PGMSQTRPVT…SGLRGDENIH (162 aa). Residue 67-74 coordinates ATP; the sequence is APMGSGKT.

Belongs to the herpesviridae OriBP family. Homodimer. Interacts with the major DNA-binding protein. Interacts with the helicase/primase component 52 and the polymerase accessory protein.

It localises to the host nucleus. Functionally, functions as a docking protein to recruit essential components of the viral replication machinery to viral DNA origins. In the presence of the major DNA-binding protein, opens dsDNA leading to a conformational change in the origin that facilitates DNA unwinding and subsequent replication. The chain is Replication origin-binding protein from Homo sapiens (Human).